The sequence spans 162 residues: Cyclic pyranopterin monophosphate synthase (162 aa).

Substrate contacts are provided by residues 75–77 (LCH) and 113–114 (ME). Aspartate 128 is an active-site residue.

The protein belongs to the MoaC family. As to quaternary structure, homohexamer; trimer of dimers.

The enzyme catalyses (8S)-3',8-cyclo-7,8-dihydroguanosine 5'-triphosphate = cyclic pyranopterin phosphate + diphosphate. It functions in the pathway cofactor biosynthesis; molybdopterin biosynthesis. Its function is as follows. Catalyzes the conversion of (8S)-3',8-cyclo-7,8-dihydroguanosine 5'-triphosphate to cyclic pyranopterin monophosphate (cPMP). This Burkholderia orbicola (strain MC0-3) protein is Cyclic pyranopterin monophosphate synthase.